The following is a 431-amino-acid chain: MSVIQDLQSRGLIAQTTDIEALDALLNEQKIALYCGFDPTADSLHIGHLLPVLALRRFQQAGHTPIALVGGATGMIGDPSFKAAERSLNSAETVAGWVESIRNQLTPFLSFEGGNAAIMANNADWFGKMNCLDFLRDIGKHFSVNAMLNKESVKQRIDRDGAGISFTEFAYSLLQGYDFAELNKRHGAVLEIGGSDQWGNITAGIDLTRRLNQKQVFGLTLPLVTKSDGTKFGKTEGGAVWLNAKKTSPYQFYQFWLKVADADVYKFLKYFTFLSIEEIDAIEAKDKASGTKPEAQRILAEEMTRLIHGEAALQAAQRISESLFAEDQSSLTESDFEQLALDGLPAFEVSDGINVVEALVKTGLASSNKEARGFVNSKAVLLNGKPAEANNPNHAAERPDDACLLTDEHKRFGKYTILRRGKRNHALLVWK.

Residue Y34 coordinates L-tyrosine. The 'HIGH' region motif lies at P39–H48. Residues Y171 and Q175 each coordinate L-tyrosine. A 'KMSKS' region motif is present at residues K231–T235. K234 contacts ATP. The S4 RNA-binding domain occupies I353–K422.

This sequence belongs to the class-I aminoacyl-tRNA synthetase family. TyrS type 1 subfamily. In terms of assembly, homodimer.

The protein localises to the cytoplasm. It catalyses the reaction tRNA(Tyr) + L-tyrosine + ATP = L-tyrosyl-tRNA(Tyr) + AMP + diphosphate + H(+). Functionally, catalyzes the attachment of tyrosine to tRNA(Tyr) in a two-step reaction: tyrosine is first activated by ATP to form Tyr-AMP and then transferred to the acceptor end of tRNA(Tyr). The polypeptide is Tyrosine--tRNA ligase (Neisseria meningitidis serogroup A / serotype 4A (strain DSM 15465 / Z2491)).